We begin with the raw amino-acid sequence, 178 residues long: Caveolin-1 (178 aa).

Residue serine 2 is modified to N-acetylserine. Serine 2 carries the post-translational modification Phosphoserine. Positions 2 to 94 (SGGKYVDSEG…WKASFTTFTV (93 aa)) are required for homooligomerization. At 2 to 104 (SGGKYVDSEG…TKYWFYRLLS (103 aa)) the chain is on the cytoplasmic side. Lysine 5 carries the post-translational modification N6-acetyllysine; alternate. Residue lysine 5 forms a Glycyl lysine isopeptide (Lys-Gly) (interchain with G-Cter in ubiquitin); alternate linkage. A Phosphotyrosine modification is found at tyrosine 6. Serine 9 bears the Phosphoserine mark. Tyrosine 14 carries the post-translational modification Phosphotyrosine; by ABL1. Residue tyrosine 25 is modified to Phosphotyrosine. Residues lysine 26, lysine 30, lysine 39, lysine 47, and lysine 57 each participate in a glycyl lysine isopeptide (Lys-Gly) (interchain with G-Cter in ubiquitin) cross-link. An interaction with CAVIN3 region spans residues 82-94 (DGIWKASFTTFTV). The helical intramembrane region spans 105 to 125 (ALFGIPMALIWGIYFAILSFL). Over 126 to 178 (HIWAVVPCIKSFLIEIQCISRVYSIYVHTFCDPLFEAIGKIFSNIRINMQKEI) the chain is Cytoplasmic. Residues 131–142 (VPCIKSFLIEIQ) are interacts with SPRY1, SPRY2, SPRY3 and SPRY4. Residues cysteine 133, cysteine 143, and cysteine 156 are each lipidated (S-palmitoyl cysteine). Residues 149–160 (SIYVHTFCDPLF) form an interacts with SPRY1, SPRY2, and SPRY4 region. Residues 167–178 (FSNIRINMQKEI) form an interacts with SPRY1, SPRY2, SPRY3 and SPRY4 region.

It belongs to the caveolin family. In terms of assembly, homooligomer. Interacts with GLIPR2. Interacts with NOSTRIN. Interacts with SNAP25 and STX1A. Interacts (via the N-terminus) with DPP4; the interaction is direct. Interacts with CTNNB1, CDH1 and JUP. Interacts with PACSIN2; this interaction induces membrane tubulation. Interacts with SLC7A9. Interacts with BMX and BTK. Interacts with TGFBR1. Interacts with CAVIN3 (via leucine-zipper domain) in a cholesterol-sensitive manner. Interacts with CAVIN1. Interacts with EHD2 in a cholesterol-dependent manner. Forms a ternary complex with UBXN6 and VCP; mediates CAV1 targeting to lysosomes for degradation. Interacts with ABCG1; this interaction regulates ABCG1-mediated cholesterol efflux. Interacts with NEU3; this interaction enhances NEU3 sialidase activity within caveola. Interacts (via C-terminus) with SPRY1, SPRY2 (via C-terminus), SPRY3, and SPRY4. Interacts with IGFBP5; this interaction allows trafficking of IGFBP5 from the plasma membrane to the nucleus. Post-translationally, phosphorylated at Tyr-14 by ABL1 in response to oxidative stress. In terms of processing, ubiquitinated. Undergo monoubiquitination and multi- and/or polyubiquitination. Monoubiquitination of N-terminal lysines promotes integration in a ternary complex with UBXN6 and VCP which promotes oligomeric CAV1 targeting to lysosomes for degradation. Ubiquitinated by ZNRF1; leading to degradation and modulation of the TLR4-mediated immune response.

Its subcellular location is the golgi apparatus membrane. It localises to the cell membrane. The protein localises to the membrane. The protein resides in the caveola. It is found in the membrane raft. Its function is as follows. May act as a scaffolding protein within caveolar membranes. Forms a stable heterooligomeric complex with CAV2 that targets to lipid rafts and drives caveolae formation. Mediates the recruitment of CAVIN proteins (CAVIN1/2/3/4) to the caveolae. Interacts directly with G-protein alpha subunits and can functionally regulate their activity. Involved in the costimulatory signal essential for T-cell receptor (TCR)-mediated T-cell activation. Its binding to DPP4 induces T-cell proliferation and NF-kappa-B activation in a T-cell receptor/CD3-dependent manner. Recruits CTNNB1 to caveolar membranes and may regulate CTNNB1-mediated signaling through the Wnt pathway. Negatively regulates TGFB1-mediated activation of SMAD2/3 by mediating the internalization of TGFBR1 from membrane rafts leading to its subsequent degradation. Binds 20(S)-hydroxycholesterol (20(S)-OHC). This is Caveolin-1 (CAV1) from Muntiacus muntjak (Barking deer).